A 348-amino-acid chain; its full sequence is Rhodopsin (348 aa).

Methionine 1 carries the N-acetylmethionine modification. The Extracellular portion of the chain corresponds to methionine 1–glutamine 36. Residues asparagine 2 and asparagine 15 are each glycosylated (N-linked (GlcNAc...) asparagine). A helical membrane pass occupies residues phenylalanine 37 to valine 61. Residues threonine 62–asparagine 73 are Cytoplasmic-facing. A helical membrane pass occupies residues tyrosine 74–tyrosine 96. The Extracellular segment spans residues threonine 97–cysteine 110. Residues cysteine 110 and cysteine 187 are joined by a disulfide bond. Residues asparagine 111–isoleucine 133 traverse the membrane as a helical segment. Positions glutamate 134 to tyrosine 136 match the 'Ionic lock' involved in activated form stabilization motif. At glutamate 134 to histidine 152 the chain is on the cytoplasmic side. A helical transmembrane segment spans residues alanine 153–valine 173. The Extracellular segment spans residues glycine 174–serine 202. Glutamate 201 serves as a coordination point for Zn(2+). A helical membrane pass occupies residues phenylalanine 203–glycine 224. Topologically, residues glutamine 225–arginine 252 are cytoplasmic. The chain crosses the membrane as a helical span at residues methionine 253–tyrosine 274. Over isoleucine 275 to isoleucine 286 the chain is Extracellular. Glutamine 279 contributes to the Zn(2+) binding site. A helical membrane pass occupies residues phenylalanine 287 to methionine 308. Lysine 296 bears the N6-(retinylidene)lysine mark. Residues leucine 309–alanine 348 lie on the Cytoplasmic side of the membrane. 2 S-palmitoyl cysteine lipidation sites follow: cysteine 322 and cysteine 323. The interval aspartate 330–alanine 348 is interaction with SAG. Serine 334 carries the post-translational modification Phosphoserine. Threonine 336 carries the phosphothreonine modification. Position 338 is a phosphoserine (serine 338). Phosphothreonine occurs at positions 340 and 342. Residue serine 343 is modified to Phosphoserine.

The protein belongs to the G-protein coupled receptor 1 family. Opsin subfamily. In terms of assembly, homodimer. May form a complex composed of RHO, GRK1 and RCVRN in a Ca(2+)-dependent manner; RCVRN prevents the interaction between GRK1 and RHO. Interacts with GRK1. Interacts (phosphorylated form) with SAG. Interacts with GNAT1. Interacts with GNAT3. SAG and G-proteins compete for a common binding site. Interacts with PRCD; the interaction promotes PRCD stability. Forms a complex with ASAP1 and ARF4. Forms a complex with ASAP1, RAB11A, Rabin8/RAB3IP, ARF4 and RAB11FIP3; the complex regulates Golgi-to-cilia rhodopsin/RHO transport in photoreceptors. Phosphorylated on some or all of the serine and threonine residues present in the C-terminal region. Post-translationally, contains one covalently linked retinal chromophore. Upon light absorption, the covalently bound 11-cis-retinal is converted to all-trans-retinal. After hydrolysis of the Schiff base and release of the covalently bound all-trans-retinal, active rhodopsin is regenerated by binding of a fresh molecule of 11-cis-retinal. Rod-shaped photoreceptor cells in the retina (at protein level).

The protein resides in the membrane. The protein localises to the cell projection. It localises to the cilium. It is found in the photoreceptor outer segment. In terms of biological role, photoreceptor required for image-forming vision at low light intensity. Required for photoreceptor cell viability after birth. Light-induced isomerization of 11-cis to all-trans retinal triggers a conformational change that activates signaling via G-proteins. Subsequent receptor phosphorylation mediates displacement of the bound G-protein alpha subunit by the arrestin SAG and terminates signaling. The polypeptide is Rhodopsin (Rho) (Mus musculus (Mouse)).